Reading from the N-terminus, the 185-residue chain is Methanol dehydrogenase activator (185 aa).

It belongs to the Nudix hydrolase family. In terms of assembly, homodimer. The cofactor is Mg(2+).

In terms of biological role, involved in the activation of the NAD-dependent methanol dehydrogenase (MDH). MDH activation by Act involves hydrolytic removal of the nicotinamide mononucleotide (NMN) moiety of the NAD cofactor, changing its ping-pong type of reaction mechanism into a ternary complex reaction mechanism. It requires the presence of magnesium ions and is also able to use ADP-ribose. The polypeptide is Methanol dehydrogenase activator (Bacillus methanolicus).